Reading from the N-terminus, the 92-residue chain is DNA-directed RNA polymerase subunit omega (92 aa).

The protein belongs to the RNA polymerase subunit omega family. As to quaternary structure, the RNAP catalytic core consists of 2 alpha, 1 beta, 1 beta' and 1 omega subunit. When a sigma factor is associated with the core the holoenzyme is formed, which can initiate transcription.

The catalysed reaction is RNA(n) + a ribonucleoside 5'-triphosphate = RNA(n+1) + diphosphate. In terms of biological role, promotes RNA polymerase assembly. Latches the N- and C-terminal regions of the beta' subunit thereby facilitating its interaction with the beta and alpha subunits. This chain is DNA-directed RNA polymerase subunit omega, found in Shewanella frigidimarina (strain NCIMB 400).